Here is a 70-residue protein sequence, read N- to C-terminus: Large ribosomal subunit protein bL31 (70 aa).

4 residues coordinate Zn(2+): Cys16, Cys18, Cys37, and Cys40.

It belongs to the bacterial ribosomal protein bL31 family. Type A subfamily. As to quaternary structure, part of the 50S ribosomal subunit. It depends on Zn(2+) as a cofactor.

Functionally, binds the 23S rRNA. The polypeptide is Large ribosomal subunit protein bL31 (Shewanella amazonensis (strain ATCC BAA-1098 / SB2B)).